Here is a 266-residue protein sequence, read N- to C-terminus: Type 1 encapsulin shell protein (266 aa).

The protein belongs to the encapsulin family. Family 1 subfamily. Homomultimeric. This encapsulin nanocompartment is formed by 60 subunits, and encloses one Dyp homohexamer; partially assembled 58-subunit compartments with and without cargo are also purified. May assemble the shell from dimers. Monomers form pentamers, which assemble to form hollow shells with pores 5-8 Angstroms in diameter where 3 pentamers meet.

The protein resides in the encapsulin nanocompartment. In terms of biological role, shell component of a type 1 encapsulin nanocompartment. Assembles into proteinaceous shells 23-24 nm in diameter with 2-2.5 nm thick walls. Endogenous cargo protein DyP (dye-decolorizing peroxidase) is targeted to the interior via its C-terminal extension; only 1 DyP hexamer is incorporated into each shell. Empty shells can be isolated in the absence of cargo. Cargo encapsulation probably precedes assembly of the nanocompartment; may assemble or disassemble via dimers, subcomplexes with a distinct preference for even numbers of subunits are detected. Nanocompartments are stable against mechanical forces; loaded nanocompartments are less stable than empty ones. Nanocompartments are stable between pH 5-10; they aggregate at pH 9-10 and start to disassemble at pH 11. They are stable in 1M NaCl, 1 M MgCl(2) and 1M CaCl(2), unstable in 20% DMSO (dimethylsulfoxide) and are stable in 20% but not 40% ethanol. This chain is Type 1 encapsulin shell protein, found in Brevibacterium linens.